Here is a 161-residue protein sequence, read N- to C-terminus: Allophycocyanin alpha chain (161 aa).

Position 71 is an N4-methylasparagine (N71). A (2R,3E)-phycocyanobilin-binding site is contributed by C81.

The protein belongs to the phycobiliprotein family. As to quaternary structure, heterodimer of an alpha and a beta chain. In terms of processing, contains one covalently linked phycocyanobilin chromophore.

It localises to the cellular thylakoid membrane. Its function is as follows. Light-harvesting photosynthetic bile pigment-protein from the phycobiliprotein complex. Allophycocyanin has a maximum absorption at approximately 650 nanometers. In Synechocystis sp. (strain ATCC 27184 / PCC 6803 / Kazusa), this protein is Allophycocyanin alpha chain (apcA).